Consider the following 680-residue polypeptide: Dihydroxyacetone phosphate acyltransferase (680 aa).

Serine 12 and serine 17 each carry phosphoserine. An HXXXXD motif motif is present at residues 162–167 (HRSYID). Position 643 is an N6-acetyllysine (lysine 643). The Microbody targeting signal signature appears at 678–680 (AKL).

This sequence belongs to the GPAT/DAPAT family. As to quaternary structure, part of a heterotrimeric complex composed of GNPAT, AGPS and a modified form of GNPAT.

The protein resides in the peroxisome membrane. The enzyme catalyses dihydroxyacetone phosphate + an acyl-CoA = a 1-acylglycerone 3-phosphate + CoA. It catalyses the reaction dihydroxyacetone phosphate + hexadecanoyl-CoA = 1-hexadecanoylglycerone 3-phosphate + CoA. It functions in the pathway membrane lipid metabolism; glycerophospholipid metabolism. Dihydroxyacetonephosphate acyltransferase catalyzing the first step in the biosynthesis of plasmalogens, a subset of phospholipids that differ from other glycerolipids by having an alkyl chain attached through a vinyl ether linkage at the sn-1 position of the glycerol backbone, and which unique physical properties have an impact on various aspects of cell signaling and membrane biology. The chain is Dihydroxyacetone phosphate acyltransferase from Homo sapiens (Human).